The chain runs to 166 residues: Disulfide bond formation protein B (166 aa).

The Cytoplasmic segment spans residues 1–12 (MKITKLPSYRQT). The chain crosses the membrane as a helical span at residues 13-29 (ALIIFAGCVGLILAALY). Residues 30 to 47 (MQEVLGLHPCPLCITQRI) lie on the Periplasmic side of the membrane. Cys39 and Cys42 are joined by a disulfide. A helical transmembrane segment spans residues 48 to 64 (FIIGVGLISLIAAIHNP). Residues 65–70 (AALGRK) lie on the Cytoplasmic side of the membrane. The helical transmembrane segment at 71-88 (VYGCLATLSGVIGAGVSA) threads the bilayer. Topologically, residues 89–145 (RHVWLQNLPEDQVPACGPDLAYMFDAFPLLDALKLLFAGDGNCADVVASFLGLSIPG) are periplasmic. A disulfide bond links Cys104 and Cys131. A helical membrane pass occupies residues 146-164 (WTFVAFVGLIAISVWQGLR). Over 165–166 (KA) the chain is Cytoplasmic.

This sequence belongs to the DsbB family.

The protein resides in the cell inner membrane. Its function is as follows. Required for disulfide bond formation in some periplasmic proteins. Acts by oxidizing the DsbA protein. This Saccharophagus degradans (strain 2-40 / ATCC 43961 / DSM 17024) protein is Disulfide bond formation protein B.